The sequence spans 285 residues: MSTNDNWYIEHFQPTGSAIGYRISGKLDEVQSPFQKIEIYQTTDWGKLMIIDGAVMLTSRDNFFYHEMISHPALFTHAAPKRVVIIGGGDCGTLREVLKHPGVESATQCDIDEQVTRMSEKYFPELCDSNDDARAELLFDDGVAYMANCPAGSVDIVIVDSTDPVGPAEGLFNKSFYESCFKALKDDGILVQQSESPLALLDLIKEMRTEMGKAGFQSFKTLPFPQPCYPTGWWSVTMASKQANADFAFRQADAQAKGFDTLYYTAHLHTGVLVAPPFVAKALGE.

The 237-residue stretch at 5 to 241 (DNWYIEHFQP…GWWSVTMASK (237 aa)) folds into the PABS domain. Glutamine 35 lines the S-methyl-5'-thioadenosine pocket. Spermidine-binding residues include histidine 66 and aspartate 90. Residues aspartate 110 and 141-142 (DG) contribute to the S-methyl-5'-thioadenosine site. Aspartate 160 (proton acceptor) is an active-site residue. 160-163 (DSTD) serves as a coordination point for spermidine. An S-methyl-5'-thioadenosine-binding site is contributed by proline 167.

This sequence belongs to the spermidine/spermine synthase family. Homodimer or homotetramer.

It localises to the cytoplasm. The enzyme catalyses S-adenosyl 3-(methylsulfanyl)propylamine + putrescine = S-methyl-5'-thioadenosine + spermidine + H(+). It participates in amine and polyamine biosynthesis; spermidine biosynthesis; spermidine from putrescine: step 1/1. Catalyzes the irreversible transfer of a propylamine group from the amino donor S-adenosylmethioninamine (decarboxy-AdoMet) to putrescine (1,4-diaminobutane) to yield spermidine. The polypeptide is Polyamine aminopropyltransferase (Xanthomonas campestris pv. campestris (strain 8004)).